A 429-amino-acid chain; its full sequence is Enolase (429 aa).

Gln174 serves as a coordination point for (2R)-2-phosphoglycerate. Glu218 functions as the Proton donor in the catalytic mechanism. Mg(2+)-binding residues include Asp254, Glu295, and Asp321. The (2R)-2-phosphoglycerate site is built by Lys346, Arg375, Ser376, and Lys397. Lys346 serves as the catalytic Proton acceptor.

It belongs to the enolase family. Requires Mg(2+) as cofactor.

It localises to the cytoplasm. The protein resides in the secreted. It is found in the cell surface. It catalyses the reaction (2R)-2-phosphoglycerate = phosphoenolpyruvate + H2O. It functions in the pathway carbohydrate degradation; glycolysis; pyruvate from D-glyceraldehyde 3-phosphate: step 4/5. Its function is as follows. Catalyzes the reversible conversion of 2-phosphoglycerate (2-PG) into phosphoenolpyruvate (PEP). It is essential for the degradation of carbohydrates via glycolysis. In Methanosarcina acetivorans (strain ATCC 35395 / DSM 2834 / JCM 12185 / C2A), this protein is Enolase.